The sequence spans 288 residues: Fibroblast growth factor 2 (288 aa).

Residues 1–133 form a disordered region; that stretch reads MVGVGGGDVE…RGSRPGPAGT (133 aa). Positions 1-142 are cleaved as a propeptide — or 93, or 124, or 125, or 131, or 161; it reads MVGVGGGDVE…TMAAGSITTL (142 aa). Positions 52–64 are enriched in low complexity; that stretch reads SVNPRSRAAGSPR. The span at 68 to 84 shows a compositional bias: basic and acidic residues; sequence RRTEERPSGSRLGDRGR. Arg108, Arg110, and Arg112 each carry omega-N-methylarginine; alternate. A symmetric dimethylarginine; alternate mark is found at Arg108, Arg110, and Arg112. Positions 113-132 are enriched in low complexity; it reads GTAAPRAAPAARGSRPGPAG. Residue Asn169 coordinates heparin. The short motif at 179–181 is the Cell attachment site; atypical element; the sequence is DGR. Phosphotyrosine; by TEC is present on Tyr215. Positions 221–223 match the Cell attachment site; atypical motif; that stretch reads DGR. Lys228 participates in a covalent cross-link: Glycyl lysine isopeptide (Lys-Gly) (interchain with G-Cter in SUMO1). A heparin-binding region spans residues 261 to 277; it reads KRTGQYKLGSKTGPGQK.

The protein belongs to the heparin-binding growth factors family. In terms of assembly, monomer. Homodimer. Interacts with FGFR1, FGFR2, FGFR3 and FGFR4. Affinity between fibroblast growth factors (FGFs) and their receptors is increased by heparan sulfate glycosaminoglycans that function as coreceptors. Interacts with CSPG4, FGFBP1 and TEC. Found in a complex with FGFBP1, FGF1 and FGF2. Interacts with FGFBP3. Interacts with integrin ITGAV:ITGB3; the interaction is required for FGF2 signaling. Interacts with SNORC (via the extracellular domain). Interacts with glypican GPC3. Post-translationally, phosphorylation at Tyr-215 regulates FGF2 unconventional secretion. Several N-termini starting at positions 94, 125, 126, 132, 143 and 162 have been identified by direct sequencing. Expressed in granulosa and cumulus cells. Expressed in hepatocellular carcinoma cells, but not in non-cancerous liver tissue.

The protein resides in the secreted. The protein localises to the nucleus. Functionally, acts as a ligand for FGFR1, FGFR2, FGFR3 and FGFR4. Also acts as an integrin ligand which is required for FGF2 signaling. Binds to integrin ITGAV:ITGB3. Plays an important role in the regulation of cell survival, cell division, cell differentiation and cell migration. Functions as a potent mitogen in vitro. Can induce angiogenesis. Mediates phosphorylation of ERK1/2 and thereby promotes retinal lens fiber differentiation. The sequence is that of Fibroblast growth factor 2 (FGF2) from Homo sapiens (Human).